Consider the following 302-residue polypeptide: Recombination-associated protein RdgC (302 aa).

It belongs to the RdgC family.

It is found in the cytoplasm. Its subcellular location is the nucleoid. Its function is as follows. May be involved in recombination. This is Recombination-associated protein RdgC from Actinobacillus pleuropneumoniae serotype 7 (strain AP76).